The primary structure comprises 441 residues: Transcriptional regulatory protein ZraR (441 aa).

Positions 7–121 (DILVVDDDIS…NLQATLEKAL (115 aa)) constitute a Response regulatory domain. Residue Asp-56 is modified to 4-aspartylphosphate. In terms of domain architecture, Sigma-54 factor interaction spans 141-370 (MVGKSPAMQH…LENAVERAVV (230 aa)). The ATP site is built by Gly-172, Thr-173, Arg-329, and Arg-359. The segment at residues 421-440 (KTEAARQLGITRKTLLAKLS) is a DNA-binding region (H-T-H motif).

Phosphorylated by ZraS.

The protein resides in the cytoplasm. Activity of the ZraS/ZraR two-component system is repressed by the zinc-bound form of ZraP, which probably interacts with the periplasmic region of ZraS. Functionally, part of the Zra signaling pathway, an envelope stress response (ESR) system composed of the periplasmic accessory protein ZraP, the histidine kinase ZraS and the transcriptional regulator ZraR. The ZraPSR system contributes to antibiotic resistance and is important for membrane integrity in the presence of membrane-targeting biocides. ZraR is a member of the two-component regulatory system ZraS/ZraR. When activated by ZraS, acts in conjunction with sigma-54 to regulate the expression of zraP in the presence of high Zn(2+) or Pb(2+) concentrations. Also positively autoregulates the expression of the zraSR operon. The chain is Transcriptional regulatory protein ZraR (zraR) from Escherichia coli O157:H7.